The sequence spans 533 residues: MNDFWQHCSALLERELTPQQYVTWIKPLAPVAFDAAANTLSIAAPNRFKLDWVKSQFSGRISDLARDFWNAPIEVQFVLDPKAGQRSPAGATPLAPRAPLPSANPAPVAPGPACAPAVDAHAPAPAGMNAATAAAVAAAQAAQAAQANAAALNADEAADLDLPSLTAHEAAAGRRTWRPGAANANSEAADSMYERSKLNPVLTFDNFVTGKANQLARAAAIQVADNPGISYNPLFLYGGVGLGKTHLIHAIGNQLLLDKPGARIRYIHAEQYVSDVVKAYQRKAFDDFKRYYHSLDLLLIDDIQFFSGKSRTQEEFFYAFEALVANKAQVIITSDTYPKEISGIDDRLISRFDSGLTVAIEPPELEMRVAILMRKAQSEGVSLSEDVAFFVAKHLRSNVRELEGALRKILAYSKFHGREITIELTKEALKDLLTVQNRQISVENIQKTVADFYNIKVADMYSKKRPANIARPRQIAMYLAKELTQKSLPEIGELFGGRDHTTVLHAVRKIADERGKDAQLNHELHVLEQTLKG.

The domain I, interacts with DnaA modulators stretch occupies residues M1–P72. Residues P72–S196 form a domain II region. Residues A83–A113 are disordered. Residues P96–P110 are compositionally biased toward pro residues. Residues K197–S413 are domain III, AAA+ region. Positions 241, 243, 244, and 245 each coordinate ATP. The domain IV, binds dsDNA stretch occupies residues K414–G533.

The protein belongs to the DnaA family. Oligomerizes as a right-handed, spiral filament on DNA at oriC.

The protein resides in the cytoplasm. Its function is as follows. Plays an essential role in the initiation and regulation of chromosomal replication. ATP-DnaA binds to the origin of replication (oriC) to initiate formation of the DNA replication initiation complex once per cell cycle. Binds the DnaA box (a 9 base pair repeat at the origin) and separates the double-stranded (ds)DNA. Forms a right-handed helical filament on oriC DNA; dsDNA binds to the exterior of the filament while single-stranded (ss)DNA is stabiized in the filament's interior. The ATP-DnaA-oriC complex binds and stabilizes one strand of the AT-rich DNA unwinding element (DUE), permitting loading of DNA polymerase. After initiation quickly degrades to an ADP-DnaA complex that is not apt for DNA replication. Binds acidic phospholipids. In Burkholderia mallei (strain SAVP1), this protein is Chromosomal replication initiator protein DnaA.